The primary structure comprises 162 residues: Regulator of sigma D (162 aa).

This sequence belongs to the Rsd/AlgQ family. As to quaternary structure, interacts with RpoD.

The protein resides in the cytoplasm. Functionally, binds RpoD and negatively regulates RpoD-mediated transcription activation by preventing the interaction between the primary sigma factor RpoD with the catalytic core of the RNA polymerase and with promoter DNA. May be involved in replacement of the RNA polymerase sigma subunit from RpoD to RpoS during the transition from exponential growth to the stationary phase. In Salmonella arizonae (strain ATCC BAA-731 / CDC346-86 / RSK2980), this protein is Regulator of sigma D.